A 161-amino-acid chain; its full sequence is ATP synthase subunit b 1 (161 aa).

A helical membrane pass occupies residues 1–21 (MFATAEFWILACLVAFFAILG).

This sequence belongs to the ATPase B chain family. F-type ATPases have 2 components, F(1) - the catalytic core - and F(0) - the membrane proton channel. F(1) has five subunits: alpha(3), beta(3), gamma(1), delta(1), epsilon(1). F(0) has three main subunits: a(1), b(2) and c(10-14). The alpha and beta chains form an alternating ring which encloses part of the gamma chain. F(1) is attached to F(0) by a central stalk formed by the gamma and epsilon chains, while a peripheral stalk is formed by the delta and b chains.

It localises to the cell inner membrane. F(1)F(0) ATP synthase produces ATP from ADP in the presence of a proton or sodium gradient. F-type ATPases consist of two structural domains, F(1) containing the extramembraneous catalytic core and F(0) containing the membrane proton channel, linked together by a central stalk and a peripheral stalk. During catalysis, ATP synthesis in the catalytic domain of F(1) is coupled via a rotary mechanism of the central stalk subunits to proton translocation. Its function is as follows. Component of the F(0) channel, it forms part of the peripheral stalk, linking F(1) to F(0). The sequence is that of ATP synthase subunit b 1 from Parvibaculum lavamentivorans (strain DS-1 / DSM 13023 / NCIMB 13966).